We begin with the raw amino-acid sequence, 210 residues long: Small heat shock protein hspG6 (210 aa).

The sHSP domain occupies 34–210 (KTIIDKLPPM…YSNTIKININ (177 aa)). Residues 93 to 151 (VIEKSTSSSTLDSKEDEPSIEEFEDDIKPKSKSDNTTVSTTTTATTKENKEDENKTKST) are disordered. Residues 126–138 (DNTTVSTTTTATT) show a composition bias toward low complexity. Basic and acidic residues predominate over residues 139–151 (KENKEDENKTKST).

It belongs to the small heat shock protein (HSP20) family.

The polypeptide is Small heat shock protein hspG6 (hspG6) (Dictyostelium discoideum (Social amoeba)).